The sequence spans 436 residues: Na(+)/H(+) antiporter NhaA 2 (436 aa).

The next 11 helical transmembrane spans lie at 35–55 (FGGG…NSPW), 80–100 (LATW…GLEL), 116–136 (ALPV…YVGI), 147–167 (GWAI…AVIG), 176–196 (AFLL…IAIF), 201–221 (FKLT…LLVQ), 226–246 (WWWA…ESGV), 283–303 (VSAG…SLRG), 313–333 (PIVV…IFGS), 354–374 (LLGV…IGEL), and 385–405 (VKAA…AVLS).

It belongs to the NhaA Na(+)/H(+) (TC 2.A.33) antiporter family.

The protein resides in the cell membrane. The catalysed reaction is Na(+)(in) + 2 H(+)(out) = Na(+)(out) + 2 H(+)(in). In terms of biological role, na(+)/H(+) antiporter that extrudes sodium in exchange for external protons. This chain is Na(+)/H(+) antiporter NhaA 2, found in Salinispora arenicola (strain CNS-205).